Consider the following 85-residue polypeptide: Putative membrane protein insertion efficiency factor (85 aa).

Belongs to the UPF0161 family.

It is found in the cell inner membrane. Could be involved in insertion of integral membrane proteins into the membrane. This Escherichia coli O157:H7 protein is Putative membrane protein insertion efficiency factor.